The chain runs to 184 residues: ATP-dependent protease subunit HslV (184 aa).

Thr-8 is a catalytic residue. Positions 165, 168, and 171 each coordinate Na(+).

This sequence belongs to the peptidase T1B family. HslV subfamily. As to quaternary structure, a double ring-shaped homohexamer of HslV is capped on each side by a ring-shaped HslU homohexamer. The assembly of the HslU/HslV complex is dependent on binding of ATP.

The protein localises to the cytoplasm. The enzyme catalyses ATP-dependent cleavage of peptide bonds with broad specificity.. With respect to regulation, allosterically activated by HslU binding. Functionally, protease subunit of a proteasome-like degradation complex believed to be a general protein degrading machinery. The protein is ATP-dependent protease subunit HslV of Pediococcus pentosaceus (strain ATCC 25745 / CCUG 21536 / LMG 10740 / 183-1w).